A 280-amino-acid chain; its full sequence is Undecaprenyl-diphosphatase (280 aa).

8 consecutive transmembrane segments (helical) span residues 19–39 (FLPV…PFSG), 44–64 (FDDL…LFLY), 89–109 (FYFL…GFIA), 125–145 (ILAS…WFFQ), 156–176 (VGFR…IPGV), 197–217 (AEFS…YKLI), 226–246 (VTIP…TLVI), and 259–279 (GVFG…TKFI).

It belongs to the UppP family.

The protein resides in the cell inner membrane. The catalysed reaction is di-trans,octa-cis-undecaprenyl diphosphate + H2O = di-trans,octa-cis-undecaprenyl phosphate + phosphate + H(+). Its function is as follows. Catalyzes the dephosphorylation of undecaprenyl diphosphate (UPP). Confers resistance to bacitracin. This is Undecaprenyl-diphosphatase from Leptospira borgpetersenii serovar Hardjo-bovis (strain L550).